Reading from the N-terminus, the 343-residue chain is Cilia- and flagella-associated protein 36 (343 aa).

Phosphoserine occurs at positions 85 and 147. Positions 147–187 (SDLEQEEMKILREVLRKSKEEYDQEEERKRKKQSSEAKMEE) form a coiled coil. Residues 165 to 188 (KEEYDQEEERKRKKQSSEAKMEEL) are disordered. At serine 201 the chain carries Phosphoserine. Composition is skewed to basic and acidic residues over residues 279 to 293 (QKRD…DTRT) and 301 to 323 (QKGK…AEEK). Residues 279-323 (QKRDKLLSMRKDTRTKQIQNTEQKGKPTREAEEMTEKPEMTAEEK) form a disordered region.

This sequence belongs to the CFAP36 family. As to quaternary structure, interacts with ARL3.

It localises to the nucleus. It is found in the cytoplasm. The protein resides in the cell projection. The protein localises to the cilium. Its subcellular location is the flagellum. Its function is as follows. May act as an effector for ARL3. The chain is Cilia- and flagella-associated protein 36 from Mus musculus (Mouse).